The chain runs to 471 residues: 3-hydroxylaminophenol mutase (471 aa).

The 86-residue stretch at 15-100 folds into the GS beta-grasp domain; sequence NDVKFVDFRF…TCDVVEPSDG (86 aa). In terms of domain architecture, GS catalytic spans 107–471; the sequence is PRSIAKRAEA…PVEFEMYYSL (365 aa).

The protein belongs to the glutamine synthetase family.

The enzyme catalyses 3-hydroxyaminophenol = aminohydroquinone. With respect to regulation, is inhibited by H(2)O(2). 1,10-phenanthroline inhibits the activity slightly, but other metal cation chelators such as EDTA or tiron have no effect on the activity. Divalent metal cations and hydroxylamine have also no effect on the activity. Due to the relationship of the protein with glutamine synthetases, glutamate and glutamine were tested as inhibitors; neither preincubation of the compounds with the enzyme nor their addition to the assay buffer affected 3HAP mutase activity. Catalyzes the isomerization of 3-hydroxylaminophenol (3HAP) to aminohydroquinone, a step in the degradative pathway of 3-nitrophenol. The enzymatic reaction is regiospecific since it leads to the formation of aminohydroquinone exclusively, without producing the isomeric 4-aminocatechol. Can also isomerize other hydroxylaminoaromatic compounds, such as hydroxylaminobenzene to a mixture of 2-aminophenol and 4-aminophenol, 4-hydroxylaminotoluene to 6-amino-m-cresol, and 2-chloro-5-hydroxylaminophenol to 2-amino-5-chlorohydroquinone. Does not act on 4-hydroxylaminobenzoate. The sequence is that of 3-hydroxylaminophenol mutase from Cupriavidus pinatubonensis (strain JMP 134 / LMG 1197) (Cupriavidus necator (strain JMP 134)).